The following is a 225-amino-acid chain: C-reactive protein (225 aa).

Positions 1 to 20 are cleaved as a signal peptide; sequence MEKLLWCFLTLVSFSNMSDQ. A Pentraxin (PTX) domain is found at 24-225; that stretch reads HKKAFVFPKE…EVHVKPQLWP (202 aa). C55 and C116 are disulfide-bonded. Ca(2+) contacts are provided by N80, Q158, D159, and Q169.

Belongs to the pentraxin family. Homopentamer. Pentraxin (or pentaxin) have a discoid arrangement of 5 non-covalently bound subunits. Interacts with FCN1; may regulate monocyte activation by FCN1. It depends on Ca(2+) as a cofactor. In terms of tissue distribution, found in plasma.

Its subcellular location is the secreted. In terms of biological role, displays several functions associated with host defense: it promotes agglutination, bacterial capsular swelling, phagocytosis and complement fixation through its calcium-dependent binding to phosphorylcholine. Can interact with DNA and histones and may scavenge nuclear material released from damaged circulating cells. The protein is C-reactive protein (CRP) of Oryctolagus cuniculus (Rabbit).